We begin with the raw amino-acid sequence, 695 residues long: Elongation factor G 2 (695 aa).

Residues 5–280 (SLYRNIGIFA…AVVDYLPSPT (276 aa)) form the tr-type G domain. GTP-binding positions include 14 to 21 (AHVDAGKT), 78 to 82 (DTPGH), and 132 to 135 (NKLD).

It belongs to the TRAFAC class translation factor GTPase superfamily. Classic translation factor GTPase family. EF-G/EF-2 subfamily.

It is found in the cytoplasm. Functionally, catalyzes the GTP-dependent ribosomal translocation step during translation elongation. During this step, the ribosome changes from the pre-translocational (PRE) to the post-translocational (POST) state as the newly formed A-site-bound peptidyl-tRNA and P-site-bound deacylated tRNA move to the P and E sites, respectively. Catalyzes the coordinated movement of the two tRNA molecules, the mRNA and conformational changes in the ribosome. This is Elongation factor G 2 from Vibrio cholerae serotype O1 (strain ATCC 39315 / El Tor Inaba N16961).